We begin with the raw amino-acid sequence, 299 residues long: Bifunctional protein FolD 1 (299 aa).

NADP(+) is bound by residues 168 to 170 (GRS), Ser193, and Ile234.

This sequence belongs to the tetrahydrofolate dehydrogenase/cyclohydrolase family. Homodimer.

It carries out the reaction (6R)-5,10-methylene-5,6,7,8-tetrahydrofolate + NADP(+) = (6R)-5,10-methenyltetrahydrofolate + NADPH. The enzyme catalyses (6R)-5,10-methenyltetrahydrofolate + H2O = (6R)-10-formyltetrahydrofolate + H(+). Its pathway is one-carbon metabolism; tetrahydrofolate interconversion. Catalyzes the oxidation of 5,10-methylenetetrahydrofolate to 5,10-methenyltetrahydrofolate and then the hydrolysis of 5,10-methenyltetrahydrofolate to 10-formyltetrahydrofolate. The protein is Bifunctional protein FolD 1 of Rhizobium etli (strain ATCC 51251 / DSM 11541 / JCM 21823 / NBRC 15573 / CFN 42).